The primary structure comprises 434 residues: Cysteine--tRNA ligase (434 aa).

Cys-28 lines the Zn(2+) pocket. Residues Pro-30–Asn-40 carry the 'HIGH' region motif. The Zn(2+) site is built by Cys-207, His-232, and Glu-236. Residues Lys-264–Ser-268 carry the 'KMSKS' region motif. An ATP-binding site is contributed by Lys-267.

It belongs to the class-I aminoacyl-tRNA synthetase family. In terms of assembly, monomer. It depends on Zn(2+) as a cofactor.

Its subcellular location is the cytoplasm. It catalyses the reaction tRNA(Cys) + L-cysteine + ATP = L-cysteinyl-tRNA(Cys) + AMP + diphosphate. This Acholeplasma laidlawii (strain PG-8A) protein is Cysteine--tRNA ligase.